The sequence spans 570 residues: Spermatocyte protein spe-26 (570 aa).

6 Kelch repeats span residues 244-291 (VLII…IVDG), 293-338 (LYLF…SVVY), 341-393 (RIYV…VFEN), 395-440 (IYVS…NHGN), 442-487 (LLIV…SYKG), and 489-535 (LFSV…VAPN).

In terms of tissue distribution, testis, in both spermatogonial cells and spermatocytes.

The protein localises to the cytoplasm. The protein resides in the cytoskeleton. In terms of biological role, may play a role in the spermatocyte cytoskeleton, possibly interacting with actin. This Caenorhabditis elegans protein is Spermatocyte protein spe-26 (spe-26).